A 355-amino-acid chain; its full sequence is uncharacterized protein (355 aa).

Residue Cys-2 is the For GATase activity of the active site. Residues 2–248 (CELLGICFNK…NGELMVFKNG (247 aa)) enclose the Glutamine amidotransferase type-2 domain.

This is an uncharacterized protein from Methanocaldococcus jannaschii (strain ATCC 43067 / DSM 2661 / JAL-1 / JCM 10045 / NBRC 100440) (Methanococcus jannaschii).